The chain runs to 746 residues: Lysine-specific histone demethylase 1 homolog 2 (746 aa).

The disordered stretch occupies residues 1-26 (MNSPASDETAPRRNRRKVSRKNYDEN). The 102-residue stretch at 51-152 (EKETETEALI…FGVSPLFAPY (102 aa)) folds into the SWIRM domain. E189, R191, R197, and E569 together coordinate FAD.

It belongs to the flavin monoamine oxidase family. FAD is required as a cofactor. Expressed in the shoot and root apical regions of young seedlings. Expressed in inflorescences.

Its function is as follows. Probable histone demethylase that reduces the levels of histone H3 'Lys-4' methylation in chromatin of the floral repressor FLOWERING LOCUS C (FLC) and the sporophytically silenced floral repressor FWA. Seems to act in partial redundancy with FLOWERING LOCUS D (FLD) to repress FLC expression. Required for cytosine methylation of FWA. Controls primary seed dormancy by regulating DOG1 and abscisic acid signaling-related genes. This Arabidopsis thaliana (Mouse-ear cress) protein is Lysine-specific histone demethylase 1 homolog 2.